The primary structure comprises 529 residues: Bifunctional purine biosynthesis protein PurH (529 aa).

The MGS-like domain occupies 1-148 (MQQRRPVRRA…KNHKDVAIVV (148 aa)). The residue at position 287 (lysine 287) is an N6-acetyllysine.

This sequence belongs to the PurH family.

It catalyses the reaction (6R)-10-formyltetrahydrofolate + 5-amino-1-(5-phospho-beta-D-ribosyl)imidazole-4-carboxamide = 5-formamido-1-(5-phospho-D-ribosyl)imidazole-4-carboxamide + (6S)-5,6,7,8-tetrahydrofolate. It carries out the reaction IMP + H2O = 5-formamido-1-(5-phospho-D-ribosyl)imidazole-4-carboxamide. Its pathway is purine metabolism; IMP biosynthesis via de novo pathway; 5-formamido-1-(5-phospho-D-ribosyl)imidazole-4-carboxamide from 5-amino-1-(5-phospho-D-ribosyl)imidazole-4-carboxamide (10-formyl THF route): step 1/1. It participates in purine metabolism; IMP biosynthesis via de novo pathway; IMP from 5-formamido-1-(5-phospho-D-ribosyl)imidazole-4-carboxamide: step 1/1. This chain is Bifunctional purine biosynthesis protein PurH, found in Escherichia coli (strain 55989 / EAEC).